Consider the following 154-residue polypeptide: Protein phosphatase 1 regulatory subunit 27 (154 aa).

ANK repeat units follow at residues serine 63–glutamine 92 and alanine 96–alanine 125.

As to quaternary structure, interacts with DYSF and PPP1CA.

Inhibits phosphatase activity of protein phosphatase 1 (PP1) complexes. The protein is Protein phosphatase 1 regulatory subunit 27 (PPP1R27) of Homo sapiens (Human).